A 129-amino-acid chain; its full sequence is uncharacterized protein (129 aa).

2 helical membrane passes run 4–24 (FKFL…ILII) and 37–57 (VISL…DLSI).

It to B.burgdorferi BBF20.

Its subcellular location is the cell membrane. This is an uncharacterized protein from Borreliella burgdorferi (strain ATCC 35210 / DSM 4680 / CIP 102532 / B31) (Borrelia burgdorferi).